Here is a 439-residue protein sequence, read N- to C-terminus: tRNA modification GTPase MnmE (439 aa).

3 residues coordinate (6S)-5-formyl-5,6,7,8-tetrahydrofolate: arginine 20, glutamate 78, and lysine 116. The TrmE-type G domain maps to 211–364 (GIYVAILGEP…LLSAIQKKVE (154 aa)). GTP is bound by residues 221-226 (NSGKST), 240-246 (SEYAGTT), and 265-268 (DTAG). Residues serine 225 and threonine 246 each coordinate Mg(2+). A (6S)-5-formyl-5,6,7,8-tetrahydrofolate-binding site is contributed by lysine 439.

This sequence belongs to the TRAFAC class TrmE-Era-EngA-EngB-Septin-like GTPase superfamily. TrmE GTPase family. Homodimer. Heterotetramer of two MnmE and two MnmG subunits. K(+) serves as cofactor.

The protein localises to the cytoplasm. Its function is as follows. Exhibits a very high intrinsic GTPase hydrolysis rate. Involved in the addition of a carboxymethylaminomethyl (cmnm) group at the wobble position (U34) of certain tRNAs, forming tRNA-cmnm(5)s(2)U34. This Ehrlichia ruminantium (strain Gardel) protein is tRNA modification GTPase MnmE.